The chain runs to 351 residues: MKALAKLKKQPGIWIINDAPIPEYGYNDVLIKIKKTAICGTDLHIYNWDKWSQNTIPVPMITGHEFAGEVVAKGDGVTSVDIGDRVSGEGHLVCGQCRNCRAGKRHLCRKTIGIGVNVQGAFAEYLVMPAVNVFKIPDSISDDIASTFDPMGNAIHTALSFNLTGEDVLITGAGPIGLMVVKIARFCGARRIVITDINEYRLQMARDFGATVALNVAPFKNQDELVKQMRKVMSDIGMTEGFDVGLEMSGINSAISMMLDVMNHGGKLSLLGISAGDISVDWGAILFKGLTLKGIYGREMFETWYLMTSMLQAGMDMNPIITHRLHIDEFQKGFEIMKSGQCGKVILDWSS.

C39 is a Zn(2+) binding site. Catalysis depends on charge relay system residues T41 and H44. H64, E65, C94, C97, C100, and C108 together coordinate Zn(2+). NAD(+) is bound by residues I176, D196, R201, 271-273 (LGI), and 295-296 (IY).

The protein belongs to the zinc-containing alcohol dehydrogenase family. As to quaternary structure, homotetramer. The cofactor is Zn(2+).

Its subcellular location is the cytoplasm. It catalyses the reaction L-threonine + NAD(+) = (2S)-2-amino-3-oxobutanoate + NADH + H(+). It participates in amino-acid degradation; L-threonine degradation via oxydo-reductase pathway; glycine from L-threonine: step 1/2. Its function is as follows. Catalyzes the NAD(+)-dependent oxidation of L-threonine to 2-amino-3-ketobutyrate. This is L-threonine 3-dehydrogenase from Francisella tularensis subsp. mediasiatica (strain FSC147).